A 63-amino-acid polypeptide reads, in one-letter code: Conotoxin Pu5.4 (63 aa).

A signal peptide spans 1–22 (MRCVPVFVILLLLIASTPSVDA). Residues 23–50 (TQKTKDDMSLASFHDNAKRFLQTLRNTR) constitute a propeptide that is removed on maturation. W62 is subject to Tryptophan amide.

Belongs to the conotoxin T superfamily. In terms of processing, contains 2 disulfide bonds that can be either 'C1-C3, C2-C4' or 'C1-C4, C2-C3', since these disulfide connectivities have been observed for conotoxins with cysteine framework V (for examples, see AC P0DQQ7 and AC P81755). In terms of tissue distribution, expressed by the venom duct.

It localises to the secreted. This chain is Conotoxin Pu5.4, found in Conus pulicarius (Flea-bitten cone).